The primary structure comprises 267 residues: Phosphonates import ATP-binding protein PhnC 2 (267 aa).

Residues 3-247 (LSLDGVDLVH…ALDALYANEQ (245 aa)) form the ABC transporter domain. ATP is bound at residue 36 to 43 (GPSGAGKT).

This sequence belongs to the ABC transporter superfamily. Phosphonates importer (TC 3.A.1.9.1) family. In terms of assembly, the complex is composed of two ATP-binding proteins (PhnC), two transmembrane proteins (PhnE) and a solute-binding protein (PhnD).

The protein resides in the cell inner membrane. The catalysed reaction is phosphonate(out) + ATP + H2O = phosphonate(in) + ADP + phosphate + H(+). Functionally, part of the ABC transporter complex PhnCDE involved in phosphonates import. Responsible for energy coupling to the transport system. This chain is Phosphonates import ATP-binding protein PhnC 2, found in Pseudomonas aeruginosa (strain UCBPP-PA14).